The sequence spans 280 residues: 4-diphosphocytidyl-2-C-methyl-D-erythritol kinase (280 aa).

The active site involves K8. 91-101 contributes to the ATP binding site; sequence PVAAGLAGGST. D133 is an active-site residue.

It belongs to the GHMP kinase family. IspE subfamily.

It catalyses the reaction 4-CDP-2-C-methyl-D-erythritol + ATP = 4-CDP-2-C-methyl-D-erythritol 2-phosphate + ADP + H(+). It participates in isoprenoid biosynthesis; isopentenyl diphosphate biosynthesis via DXP pathway; isopentenyl diphosphate from 1-deoxy-D-xylulose 5-phosphate: step 3/6. Functionally, catalyzes the phosphorylation of the position 2 hydroxy group of 4-diphosphocytidyl-2C-methyl-D-erythritol. This chain is 4-diphosphocytidyl-2-C-methyl-D-erythritol kinase, found in Clostridium botulinum (strain 657 / Type Ba4).